The following is a 119-amino-acid chain: Phytosulfokines 2 (119 aa).

The signal sequence occupies residues 1–34 (MSTTRGVSSSSAAAALALLLLFALCFFSFHFAAA). The propeptide occupies 35–109 (ARAVPRDEHQ…RRLLSDAHLD (75 aa)). Sulfotyrosine is present on residues Tyr110 and Tyr112. A propeptide spanning residues 115-119 (HKNKP) is cleaved from the precursor.

The protein belongs to the phytosulfokine family. In terms of processing, sulfation is important for activity and for the binding to a putative membrane receptor. PSK-alpha is produced by endopeptidase digestion. PSK-beta is produced from PSK-alpha by exopeptidase digestion.

Its subcellular location is the secreted. Its function is as follows. Promotes plant cell differentiation, organogenesis and somatic embryogenesis as well as cell proliferation. The protein is Phytosulfokines 2 (PSK2) of Oryza sativa subsp. japonica (Rice).